Here is a 312-residue protein sequence, read N- to C-terminus: Olfactory receptor 1493 (312 aa).

The Extracellular portion of the chain corresponds to 1 to 23 (MNNKTVITHFLLLGLPIPPEHQQ). Asparagine 3 carries N-linked (GlcNAc...) asparagine glycosylation. The helical transmembrane segment at 24 to 48 (LFFALFLIMYLTTFLGNLLIVVLVQ) threads the bilayer. At 49 to 55 (LDSHLHT) the chain is on the cytoplasmic side. A helical transmembrane segment spans residues 56–77 (PMYLFLSNLSFSDLCFSSVTML). Topologically, residues 78 to 98 (KLLQNIQSQVPSISYAGCLTQ) are extracellular. Cysteine 95 and cysteine 187 are disulfide-bonded. The helical transmembrane segment at 99 to 118 (IFFFLLFGYLGNFLLVAMAY) threads the bilayer. Residues 119–137 (DRYVAICFPLHYTNIMSHK) lie on the Cytoplasmic side of the membrane. The helical transmembrane segment at 138–156 (LCTCLLLVFWIMTSSHAMM) threads the bilayer. Topologically, residues 157–194 (HTLLAARLSFCENNVLLNFFCDLFVLLKLACSDTYVNE) are extracellular. Residues 195-217 (LMIHIMGVIIIVIPFVLIVISYA) form a helical membrane-spanning segment. Residues 218–234 (KIISSILKVPSTQSIHK) are Cytoplasmic-facing. A helical membrane pass occupies residues 235–258 (VFSTCGSHLSVVSLFYGTIIGLYL). Topologically, residues 259–270 (CPSGDNFSLKGS) are extracellular. A helical membrane pass occupies residues 271-290 (AMAMMYTVVTPMLNPFIYSL). The Cytoplasmic portion of the chain corresponds to 291–312 (RNRDMKQALIRVTCSKKISLPW).

It belongs to the G-protein coupled receptor 1 family. In terms of tissue distribution, olfactory epithelium.

The protein localises to the cell membrane. Functionally, odorant receptor. This Rattus norvegicus (Rat) protein is Olfactory receptor 1493 (Olr1493).